A 451-amino-acid polypeptide reads, in one-letter code: MALQNIGASNRDDAFYRYKMPRMITKIEGRGNGIKTNVVNMVDIAKALARPASYTTKYFGCELGAQSKFDEKTGISLVNGAHDTAKLAGLLEVFIKKYVQCYGCGNPETEILISKTQMISLKCAACGFVSDVDMRDKLTTFILKNPPEQKKGGKDKKAMRRAEKERLKEGEAADEEQKKLKKDAKKKGSKDSTAKGLKKKATTATGSDEDHSSSPTRSHDGDKAAADDDDDDVQWQTDTSIEAAKQRMQEQLSAATAEMVMLSTEETEKKMKQPTHKDGSTNGSAKEIPNDKPAVTKPSPYEELIGDIKASLGSAPTPSQLKAVLASSTLPPQDVMNAPLEALFGGVGKGFTKEVVKNKKYLAVAVPDEGAQTLLVQAIEAFGGKCNPEALKEVPVVLKALYDGDILDEETIVDWYNDAVAAGKDSQVVKNAKPFVEWLQSAESDEEGDDE.

Residue 29–36 (GRGNGIKT) coordinates GTP. Disordered regions lie at residues 143–233 (LKNP…DDDV) and 263–299 (STEE…TKPS). Over residues 147–178 (PEQKKGGKDKKAMRRAEKERLKEGEAADEEQK) the composition is skewed to basic and acidic residues. Residues 179 to 188 (KLKKDAKKKG) show a composition bias toward basic residues. 2 stretches are compositionally biased toward basic and acidic residues: residues 208-226 (DEDH…KAAA) and 266-279 (ETEK…HKDG). The W2 domain maps to 290 to 449 (NDKPAVTKPS…QSAESDEEGD (160 aa)).

It belongs to the eIF-2-beta/eIF-5 family.

In terms of biological role, catalyzes the hydrolysis of GTP bound to the 40S ribosomal initiation complex (40S.mRNA.Met-tRNA[F].eIF-2.GTP) with the subsequent joining of a 60S ribosomal subunit resulting in the release of eIF-2 and the guanine nucleotide. The subsequent joining of a 60S ribosomal subunit results in the formation of a functional 80S initiation complex (80S.mRNA.Met-tRNA[F]). The polypeptide is Eukaryotic translation initiation factor 5 (EIF5) (Zea mays (Maize)).